The primary structure comprises 94 residues: DNA-binding protein HU (94 aa).

This sequence belongs to the bacterial histone-like protein family. In terms of assembly, homodimer.

In terms of biological role, histone-like DNA-binding protein which is capable of wrapping DNA to stabilize it, and thus to prevent its denaturation under extreme environmental conditions. The chain is DNA-binding protein HU (hup) from Helicobacter pylori (strain J99 / ATCC 700824) (Campylobacter pylori J99).